A 333-amino-acid polypeptide reads, in one-letter code: Glyceraldehyde-3-phosphate dehydrogenase (333 aa).

NAD(+) contacts are provided by residues 11 to 12, Asp-35, Met-79, and Ser-121; that span reads RI. Residues 150-152, Thr-181, 210-211, and Arg-233 each bind D-glyceraldehyde 3-phosphate; these read SCT and TG. Cys-151 serves as the catalytic Nucleophile. Asn-315 is a binding site for NAD(+).

The protein belongs to the glyceraldehyde-3-phosphate dehydrogenase family. In terms of assembly, homotetramer.

The protein localises to the cytoplasm. It catalyses the reaction D-glyceraldehyde 3-phosphate + phosphate + NAD(+) = (2R)-3-phospho-glyceroyl phosphate + NADH + H(+). It participates in carbohydrate degradation; glycolysis; pyruvate from D-glyceraldehyde 3-phosphate: step 1/5. Functionally, catalyzes the oxidative phosphorylation of glyceraldehyde 3-phosphate (G3P) to 1,3-bisphosphoglycerate (BPG) using the cofactor NAD. The first reaction step involves the formation of a hemiacetal intermediate between G3P and a cysteine residue, and this hemiacetal intermediate is then oxidized to a thioester, with concomitant reduction of NAD to NADH. The reduced NADH is then exchanged with the second NAD, and the thioester is attacked by a nucleophilic inorganic phosphate to produce BPG. The protein is Glyceraldehyde-3-phosphate dehydrogenase (gap) of Bacteroides fragilis (strain YCH46).